The chain runs to 398 residues: 1-deoxy-D-xylulose 5-phosphate reductoisomerase (398 aa).

7 residues coordinate NADPH: Thr-11, Gly-12, Ser-13, Ile-14, Arg-38, Asn-39, and Asn-125. Lys-126 is a 1-deoxy-D-xylulose 5-phosphate binding site. Glu-127 serves as a coordination point for NADPH. Asp-151 is a binding site for Mn(2+). Ser-152, Glu-153, Ser-179, and His-202 together coordinate 1-deoxy-D-xylulose 5-phosphate. Residue Glu-153 coordinates Mn(2+). Residue Gly-208 coordinates NADPH. Positions 215, 220, 221, and 224 each coordinate 1-deoxy-D-xylulose 5-phosphate. A Mn(2+)-binding site is contributed by Glu-224.

It belongs to the DXR family. It depends on Mg(2+) as a cofactor. The cofactor is Mn(2+).

The enzyme catalyses 2-C-methyl-D-erythritol 4-phosphate + NADP(+) = 1-deoxy-D-xylulose 5-phosphate + NADPH + H(+). Its pathway is isoprenoid biosynthesis; isopentenyl diphosphate biosynthesis via DXP pathway; isopentenyl diphosphate from 1-deoxy-D-xylulose 5-phosphate: step 1/6. In terms of biological role, catalyzes the NADPH-dependent rearrangement and reduction of 1-deoxy-D-xylulose-5-phosphate (DXP) to 2-C-methyl-D-erythritol 4-phosphate (MEP). The chain is 1-deoxy-D-xylulose 5-phosphate reductoisomerase from Burkholderia vietnamiensis (strain G4 / LMG 22486) (Burkholderia cepacia (strain R1808)).